The chain runs to 361 residues: Peptide chain release factor 1 (361 aa).

Gln237 bears the N5-methylglutamine mark. Residues 286–296 (EKRRSAEESTR) are compositionally biased toward basic and acidic residues. The tract at residues 286–305 (EKRRSAEESTRRNLVSSGDR) is disordered.

The protein belongs to the prokaryotic/mitochondrial release factor family. Post-translationally, methylated by PrmC. Methylation increases the termination efficiency of RF1.

The protein localises to the cytoplasm. Functionally, peptide chain release factor 1 directs the termination of translation in response to the peptide chain termination codons UAG and UAA. The protein is Peptide chain release factor 1 of Shewanella pealeana (strain ATCC 700345 / ANG-SQ1).